The following is a 245-amino-acid chain: 3-deoxy-manno-octulosonate cytidylyltransferase (245 aa).

This sequence belongs to the KdsB family.

The protein localises to the cytoplasm. It carries out the reaction 3-deoxy-alpha-D-manno-oct-2-ulosonate + CTP = CMP-3-deoxy-beta-D-manno-octulosonate + diphosphate. It functions in the pathway nucleotide-sugar biosynthesis; CMP-3-deoxy-D-manno-octulosonate biosynthesis; CMP-3-deoxy-D-manno-octulosonate from 3-deoxy-D-manno-octulosonate and CTP: step 1/1. Its pathway is bacterial outer membrane biogenesis; lipopolysaccharide biosynthesis. In terms of biological role, activates KDO (a required 8-carbon sugar) for incorporation into bacterial lipopolysaccharide in Gram-negative bacteria. The sequence is that of 3-deoxy-manno-octulosonate cytidylyltransferase from Rhodopseudomonas palustris (strain TIE-1).